A 276-amino-acid chain; its full sequence is Large ribosomal subunit protein uL2 (276 aa).

A disordered region spans residues Trp213–Thr264.

This sequence belongs to the universal ribosomal protein uL2 family. Part of the 50S ribosomal subunit. Forms a bridge to the 30S subunit in the 70S ribosome.

In terms of biological role, one of the primary rRNA binding proteins. Required for association of the 30S and 50S subunits to form the 70S ribosome, for tRNA binding and peptide bond formation. It has been suggested to have peptidyltransferase activity; this is somewhat controversial. Makes several contacts with the 16S rRNA in the 70S ribosome. This is Large ribosomal subunit protein uL2 from Granulibacter bethesdensis (strain ATCC BAA-1260 / CGDNIH1).